A 507-amino-acid polypeptide reads, in one-letter code: MVTIRADEISNIIRERIEQYNREIKIVNTGTVLQVGDGIARIHGLDEVMAGELVEFEEGTIGIALNLESSNVGVVLMGDGLMIQEGSSVKATGRIAQIPVSESYLGRVINALAKPIDGRGEISASESRLIESPAPGIISRRSVYEPLQTGLIAIDSMIPIGRGQRELIIGDRQTGKTAVATDTILNQKGQNVICVYVAIGQKASSVAQVVTTFQERGAMEYTIVVAETADSSATLQYLAPYTGAALAEYFMYRERHTLIIYDDLSKQAQAYRQMSLLLRRPPGREAYPGDVFYLHSRLLERAAKSSSRLGEGSMTALPIVETQSGDVSAYIPTNVISITDGQIFLSADLFNAGIRPAINVGISVSRVGSAAQIKAMKQVAGKSKLELAQFAELEAFAQFASDLDKATQNQLARGQRLRELLKQSQAAPLRVEEQVATIYTGANGYLDSLEIGQVKKFLVQLRTHLKTNKPQFQEIISSTKTLTGDAEALLKEAIQEQLELFLLQEQT.

170 to 177 contacts ATP; sequence GDRQTGKT.

It belongs to the ATPase alpha/beta chains family. As to quaternary structure, F-type ATPases have 2 components, CF(1) - the catalytic core - and CF(0) - the membrane proton channel. CF(1) has five subunits: alpha(3), beta(3), gamma(1), delta(1), epsilon(1). CF(0) has four main subunits: a, b, b' and c.

Its subcellular location is the plastid. It is found in the chloroplast thylakoid membrane. The enzyme catalyses ATP + H2O + 4 H(+)(in) = ADP + phosphate + 5 H(+)(out). Produces ATP from ADP in the presence of a proton gradient across the membrane. The alpha chain is a regulatory subunit. This Ceratophyllum demersum (Rigid hornwort) protein is ATP synthase subunit alpha, chloroplastic.